Reading from the N-terminus, the 232-residue chain is Lipid A 1-phosphatase (232 aa).

The next 6 helical transmembrane spans lie at 10 to 30 (LFITINAVALSMLLFDAPVGA), 42 to 62 (ELLTGFGDSAWLICISILLFF), 80 to 100 (ALYVSWIGAYLFTTVVFSGLL), 136 to 156 (FPSGHSTTVGAFFAAFALLFP), 160 to 180 (VAFIACAIWLGMTRVMVGAHY), and 183 to 203 (DVIAGLAFGGWFSLLTAIVYA).

It belongs to the lipid A LpxE 1-phosphatase family.

The protein resides in the cell inner membrane. It participates in bacterial outer membrane biogenesis; LPS lipid A biosynthesis. In terms of biological role, probably removes the 1-phosphate moiety from lipid A species. Does not seem to act on other membrane components, nor does it dephosphorylate the 4'-phosphate group of lipid A and/or lipid A precursors. This chain is Lipid A 1-phosphatase, found in Rhizobium etli (strain ATCC 51251 / DSM 11541 / JCM 21823 / NBRC 15573 / CFN 42).